Here is a 355-residue protein sequence, read N- to C-terminus: Uroporphyrinogen decarboxylase (355 aa).

Substrate-binding positions include 27 to 31, Asp-77, Tyr-154, Thr-209, and His-327; that span reads RQAGR.

This sequence belongs to the uroporphyrinogen decarboxylase family. In terms of assembly, homodimer.

It localises to the cytoplasm. The enzyme catalyses uroporphyrinogen III + 4 H(+) = coproporphyrinogen III + 4 CO2. Its pathway is porphyrin-containing compound metabolism; protoporphyrin-IX biosynthesis; coproporphyrinogen-III from 5-aminolevulinate: step 4/4. In terms of biological role, catalyzes the decarboxylation of four acetate groups of uroporphyrinogen-III to yield coproporphyrinogen-III. The chain is Uroporphyrinogen decarboxylase from Pseudoalteromonas atlantica (strain T6c / ATCC BAA-1087).